A 160-amino-acid polypeptide reads, in one-letter code: Small RNA binding protein 1 (160 aa).

An RRM domain is found at 8-86 (FRCFVGGLAW…RNITVNEAQQ (79 aa)). The interval 82 to 160 (NEAQQRGGGG…GGGSEGGWRN (79 aa)) is disordered. Residues 87–160 (RGGGGGGGYN…GGGSEGGWRN (74 aa)) are compositionally biased toward gly residues. The segment at 88 to 157 (GGGGGGGYNR…GSGGGGSEGG (70 aa)) is glycine-rich (GR) required for cell-to-cell movement.

The protein belongs to the GR-RBP family. Binds to small phloem-mobile single-stranded RNAs (ss-sRNA, e.g. small interfering RNA (siRNA) and microRNA (miRNA)) in the phloeme exudate, including viral-derived sRNA (vsiRNA). Accumulates in phloem exudates.

It localises to the secreted. Possibly has a role in RNA transcription or processing during stress. Binds sequence non-specifically to RNAs and DNAs. Mediates cell-to-cell trafficking of RNA interference (RNAi) signals (small RNAs (sRNA), e.g. small interfering RNA (siRNA) and microRNA (miRNA)) which regulate growth and development, as well as responses to environmental inputs, including pathogen attack; can compromise zucchini yellow mosaic virus (ZYMV) and tobacco rattle virus (TRV) infections at the early stage. The polypeptide is Small RNA binding protein 1 (Cucumis sativus (Cucumber)).